A 450-amino-acid polypeptide reads, in one-letter code: Glutamyl-tRNA reductase (450 aa).

Substrate is bound by residues 50–53, Ser-109, 114–116, and Gln-120; these read TCNR and EPQ. Catalysis depends on Cys-51, which acts as the Nucleophile. 189 to 194 serves as a coordination point for NADP(+); the sequence is GAGEMA. Residues 422 to 450 are disordered; that stretch reads NEPEQPEAHKNRKRPQPDLPAGCPGKTIL.

This sequence belongs to the glutamyl-tRNA reductase family. In terms of assembly, homodimer.

The enzyme catalyses (S)-4-amino-5-oxopentanoate + tRNA(Glu) + NADP(+) = L-glutamyl-tRNA(Glu) + NADPH + H(+). The protein operates within porphyrin-containing compound metabolism; protoporphyrin-IX biosynthesis; 5-aminolevulinate from L-glutamyl-tRNA(Glu): step 1/2. Functionally, catalyzes the NADPH-dependent reduction of glutamyl-tRNA(Glu) to glutamate 1-semialdehyde (GSA). In Oleidesulfovibrio alaskensis (strain ATCC BAA-1058 / DSM 17464 / G20) (Desulfovibrio alaskensis), this protein is Glutamyl-tRNA reductase.